The primary structure comprises 321 residues: Glyoxylate/hydroxypyruvate reductase B (321 aa).

Active-site residues include arginine 237 and glutamate 266. Residue histidine 285 is the Proton donor of the active site.

This sequence belongs to the D-isomer specific 2-hydroxyacid dehydrogenase family. GhrB subfamily. In terms of assembly, homodimer.

Its subcellular location is the cytoplasm. The catalysed reaction is glycolate + NADP(+) = glyoxylate + NADPH + H(+). It carries out the reaction (R)-glycerate + NAD(+) = 3-hydroxypyruvate + NADH + H(+). The enzyme catalyses (R)-glycerate + NADP(+) = 3-hydroxypyruvate + NADPH + H(+). Its function is as follows. Catalyzes the NADPH-dependent reduction of glyoxylate and hydroxypyruvate into glycolate and glycerate, respectively. The sequence is that of Glyoxylate/hydroxypyruvate reductase B from Erwinia tasmaniensis (strain DSM 17950 / CFBP 7177 / CIP 109463 / NCPPB 4357 / Et1/99).